The sequence spans 481 residues: MASVGPVKTKTVTLKELTPPIPSPEKSACKGAKPDSNHMALVPVKPSQPGSGKLITRTRLQRDSLISQQQRDALVVSSFGIGTTRHGQPDNTTSSIKDGFSTAAGGVNCASVVVAQSEKDSVRFHLCVDALAEGCVNTFIHLFHLSHRDPVCVDQLAQTLFTIPDEKLVWVKSQLAAVEVLRRQSEFRDVCERCQLLADYFESERDCDEAAWHYDVALRIAMESLDRPLEQEVRLSFGAFFERHKQLRKAIALFEEVYHLAMALNDVETAVEANYRLIRTYLSLSAELKDTNPKEAISFLERALDMSQRVKSSKDEADSLHALGNIYESMGDFRRALEYQKRFFEVARAANLVEREKRASLCVASMQERMNMTDEAVHSLQCALELSEKAADIEGVYRATMQLGQAYDSSGDHEKALMSYRANFGAARKLNNSDLTDQARVALGFALGEHYLKHAGGGRGYVPIVCDDVKAQLEWMSNGIL.

Residues 1 to 18 show a composition bias toward low complexity; sequence MASVGPVKTKTVTLKELT. Residues 1-53 are disordered; the sequence is MASVGPVKTKTVTLKELTPPIPSPEKSACKGAKPDSNHMALVPVKPSQPGSGK. TPR repeat units lie at residues 191–224, 231–264, 271–310, 317–350, 357–390, and 397–430; these read CERCQLLADYFESERDCDEAAWHYDVALRIAMES, QEVRLSFGAFFERHKQLRKAIALFEEVYHLAMAL, VEANYRLIRTYLSLSAELKDTNPKEAISFLERALDMSQRV, ADSLHALGNIYESMGDFRRALEYQKRFFEVARAA, KRASLCVASMQERMNMTDEAVHSLQCALELSEKA, and YRATMQLGQAYDSSGDHEKALMSYRANFGAARKL.

Interacts with TAX-1.

It localises to the cytoplasm. Its subcellular location is the cytoskeleton. The protein localises to the flagellum axoneme. Its function is as follows. Axonemal protein which is implicated in axonemal and/or peri-axonemal structure assembly and regulates flagellum assembly and beating. This chain is Tetratricopeptide repeat protein 29, found in Trypanosoma brucei brucei (strain 927/4 GUTat10.1).